Consider the following 206-residue polypeptide: Small ribosomal subunit protein uS4 (206 aa).

The region spanning 98–163 is the S4 RNA-binding domain; that stretch reads MRLDNVVYRL…SEKFKTFVEN (66 aa).

It belongs to the universal ribosomal protein uS4 family. Part of the 30S ribosomal subunit. Contacts protein S5. The interaction surface between S4 and S5 is involved in control of translational fidelity.

Functionally, one of the primary rRNA binding proteins, it binds directly to 16S rRNA where it nucleates assembly of the body of the 30S subunit. In terms of biological role, with S5 and S12 plays an important role in translational accuracy. This Clostridium botulinum (strain Alaska E43 / Type E3) protein is Small ribosomal subunit protein uS4.